The chain runs to 246 residues: Putative carbonic anhydrase 3 (246 aa).

Residues 3-244 (GHWSYCDDDE…LNDRKIVHIV (242 aa)) form the Alpha-carbonic anhydrase domain. The active-site Proton acceptor is the His61. Zn(2+)-binding residues include His91, His93, and His116. 187-188 (TT) lines the substrate pocket.

Belongs to the alpha-carbonic anhydrase family. The cofactor is Zn(2+).

It catalyses the reaction hydrogencarbonate + H(+) = CO2 + H2O. Its function is as follows. Reversible hydration of carbon dioxide. The polypeptide is Putative carbonic anhydrase 3 (cah-3) (Caenorhabditis elegans).